Here is a 368-residue protein sequence, read N- to C-terminus: Alcohol dehydrogenase 6 (368 aa).

Position 23 is a phosphoserine (Ser23). Residues Cys47, His69, Cys99, Cys102, Cys105, Cys113, and Cys175 each coordinate Zn(2+). Residues 200 to 205 (GLGGVG), Asp224, Lys229, and 293 to 295 (VGV) each bind NAD(+).

It belongs to the zinc-containing alcohol dehydrogenase family. Class-V subfamily. Dimer. Requires Zn(2+) as cofactor. As to expression, stomach and liver.

It localises to the cytoplasm. The enzyme catalyses a primary alcohol + NAD(+) = an aldehyde + NADH + H(+). The catalysed reaction is a secondary alcohol + NAD(+) = a ketone + NADH + H(+). Inhibited partially by pyrazole (10 mM) in the reaction mixture containing 100 mM ethanol at pH 10.0. Functionally, alcohol dehydrogenase. Catalyzes the NAD-dependent oxidation of primary alcohols to the corresponding aldehydes. Oxidizes secondary alcohols to the corresponding ketones. In Homo sapiens (Human), this protein is Alcohol dehydrogenase 6 (ADH6).